The chain runs to 193 residues: Interleukin-23 subunit alpha (193 aa).

Residues 1–22 (MLGSRAVMLMLLLLLLPWTSQG) form the signal peptide.

Belongs to the IL-6 superfamily. Heterodimer with IL12B; disulfide-linked. The heterodimer is known as interleukin IL-23. Interacts with IL23R; this interaction enables recruitment of IL12RB1.

It localises to the secreted. In terms of biological role, associates with IL12B to form the pro-inflammatory cytokine IL-23 that plays different roles in innate and adaptive immunity. Released by antigen-presenting cells such as dendritic cells or macrophages, binds to a heterodimeric receptor complex composed of IL12RB1 and IL23R to activate JAK2 and TYK2 which then phosphorylate the receptor to form a docking site leading to the phosphorylation of STAT3 and STAT4. This process leads to activation of several pathways including p38 MAPK or NF-kappa-B and promotes the production of pro-inflammatory cytokines such as interleukin-17A/IL17A. In turn, participates in the early and effective intracellular bacterial clearance. Promotes the expansion and survival of T-helper 17 cells, a CD4-positive helper T-cell subset that produces IL-17, as well as other IL-17-producing cells. The sequence is that of Interleukin-23 subunit alpha (IL23A) from Sus scrofa (Pig).